Consider the following 467-residue polypeptide: 3-isopropylmalate dehydratase large subunit (467 aa).

Residues cysteine 348, cysteine 409, and cysteine 412 each coordinate [4Fe-4S] cluster.

It belongs to the aconitase/IPM isomerase family. LeuC type 1 subfamily. As to quaternary structure, heterodimer of LeuC and LeuD. [4Fe-4S] cluster is required as a cofactor.

It carries out the reaction (2R,3S)-3-isopropylmalate = (2S)-2-isopropylmalate. It functions in the pathway amino-acid biosynthesis; L-leucine biosynthesis; L-leucine from 3-methyl-2-oxobutanoate: step 2/4. In terms of biological role, catalyzes the isomerization between 2-isopropylmalate and 3-isopropylmalate, via the formation of 2-isopropylmaleate. This chain is 3-isopropylmalate dehydratase large subunit, found in Magnetococcus marinus (strain ATCC BAA-1437 / JCM 17883 / MC-1).